The chain runs to 805 residues: FAD-dependent monooxygenase verC1 (805 aa).

Residues 1 to 20 form the signal peptide; the sequence is MTFRVIIVGGGVAGLTLASA. Glutamate 32, alanine 46, and arginine 107 together coordinate FAD. Residue asparagine 132 is glycosylated (N-linked (GlcNAc...) asparagine). Tyrosine 214 is a catalytic residue. FAD contacts are provided by aspartate 306 and alanine 319. 7 helical membrane passes run 551–571, 604–624, 632–652, 671–691, 703–723, 726–746, and 761–781; these read ALTM…AGLG, IAVL…AFFW, SWLF…YLFS, LPVI…FWMW, VFFP…VCAI, WDML…IWDL, and IYGV…LGWL.

The protein belongs to the paxM FAD-dependent monooxygenase family.

The protein localises to the membrane. The protein operates within secondary metabolite biosynthesis; terpenoid biosynthesis. It participates in mycotoxin biosynthesis. In terms of biological role, FAD-dependent monooxygenase; part of the gene cluster that mediates the biosynthesis of the neurotoxin verrucosidin, a methylated alpha-pyrone polyketide that inhibits oxidative phosphorylation in mitochondria and thereby causes neurological diseases. The carbon backbone of verrucosidin is synthesized by the HR-PKS verA, and further modified by the other verrucodidin cluster enzymes. This is FAD-dependent monooxygenase verC1 from Penicillium polonicum.